A 119-amino-acid polypeptide reads, in one-letter code: Large ribosomal subunit protein bL20 (119 aa).

This sequence belongs to the bacterial ribosomal protein bL20 family.

Functionally, binds directly to 23S ribosomal RNA and is necessary for the in vitro assembly process of the 50S ribosomal subunit. It is not involved in the protein synthesizing functions of that subunit. In Latilactobacillus sakei subsp. sakei (strain 23K) (Lactobacillus sakei subsp. sakei), this protein is Large ribosomal subunit protein bL20.